Here is a 436-residue protein sequence, read N- to C-terminus: Glutamate-1-semialdehyde 2,1-aminomutase (436 aa).

K276 carries the N6-(pyridoxal phosphate)lysine modification.

It belongs to the class-III pyridoxal-phosphate-dependent aminotransferase family. HemL subfamily. In terms of assembly, homodimer. Pyridoxal 5'-phosphate is required as a cofactor.

The protein resides in the cytoplasm. It carries out the reaction (S)-4-amino-5-oxopentanoate = 5-aminolevulinate. It participates in porphyrin-containing compound metabolism; protoporphyrin-IX biosynthesis; 5-aminolevulinate from L-glutamyl-tRNA(Glu): step 2/2. The protein operates within porphyrin-containing compound metabolism; chlorophyll biosynthesis. The chain is Glutamate-1-semialdehyde 2,1-aminomutase from Synechococcus sp. (strain JA-2-3B'a(2-13)) (Cyanobacteria bacterium Yellowstone B-Prime).